The sequence spans 354 residues: Pyruvate dehydrogenase E1 component subunit alpha (354 aa).

The disordered stretch occupies residues 1-29 (MAKATQDSNRPHKADVGSAIPNHDLPPIP).

Heterodimer of an alpha and a beta chain. Requires thiamine diphosphate as cofactor.

It catalyses the reaction N(6)-[(R)-lipoyl]-L-lysyl-[protein] + pyruvate + H(+) = N(6)-[(R)-S(8)-acetyldihydrolipoyl]-L-lysyl-[protein] + CO2. Its function is as follows. The pyruvate dehydrogenase complex catalyzes the overall conversion of pyruvate to acetyl-CoA and CO(2). It contains multiple copies of three enzymatic components: pyruvate dehydrogenase (E1), dihydrolipoamide acetyltransferase (E2) and lipoamide dehydrogenase (E3). This chain is Pyruvate dehydrogenase E1 component subunit alpha (pdhA), found in Zymomonas mobilis subsp. mobilis (strain ATCC 31821 / ZM4 / CP4).